The primary structure comprises 72 residues: Conotoxin Vc6.16 (72 aa).

An N-terminal signal peptide occupies residues 1-19 (MQKLIILLLVAAVLMSTQA). Positions 20–44 (LFQEKRPKEKIDLLSKRKTDAEKQQ) are excised as a propeptide. 3 disulfide bridges follow: Cys48–Cys62, Cys55–Cys66, and Cys61–Cys71.

The protein belongs to the conotoxin O2 superfamily. Expressed by the venom duct.

It is found in the secreted. Its function is as follows. Inhibits voltage-gated ion channels. In Conus victoriae (Queen Victoria cone), this protein is Conotoxin Vc6.16.